The sequence spans 37 residues: Large ribosomal subunit protein bL36 (37 aa).

Belongs to the bacterial ribosomal protein bL36 family.

The protein is Large ribosomal subunit protein bL36 of Cutibacterium acnes (strain DSM 16379 / KPA171202) (Propionibacterium acnes).